The primary structure comprises 346 residues: Mannonate dehydratase (346 aa).

The protein belongs to the mannonate dehydratase family. Fe(2+) is required as a cofactor. Requires Mn(2+) as cofactor.

The enzyme catalyses D-mannonate = 2-dehydro-3-deoxy-D-gluconate + H2O. The protein operates within carbohydrate metabolism; pentose and glucuronate interconversion. Catalyzes the dehydration of D-mannonate. This Cupriavidus taiwanensis (strain DSM 17343 / BCRC 17206 / CCUG 44338 / CIP 107171 / LMG 19424 / R1) (Ralstonia taiwanensis (strain LMG 19424)) protein is Mannonate dehydratase.